We begin with the raw amino-acid sequence, 537 residues long: CTP synthase (537 aa).

The interval Met-1–Leu-265 is amidoligase domain. Ser-13 contacts CTP. Ser-13 contacts UTP. Gly-14 to Ile-19 provides a ligand contact to ATP. Residue Tyr-54 participates in L-glutamine binding. Asp-71 provides a ligand contact to ATP. The Mg(2+) site is built by Asp-71 and Glu-139. CTP-binding positions include Asp-146–Glu-148, Lys-186–Gln-191, and Lys-222. Residues Lys-186–Gln-191 and Lys-222 each bind UTP. A Glutamine amidotransferase type-1 domain is found at Glu-290 to Glu-532. L-glutamine is bound at residue Gly-351. The active-site Nucleophile; for glutamine hydrolysis is Cys-378. L-glutamine is bound by residues Phe-379–Gln-382, Glu-402, and Arg-459. Catalysis depends on residues His-505 and Glu-507.

This sequence belongs to the CTP synthase family. As to quaternary structure, homotetramer.

It carries out the reaction UTP + L-glutamine + ATP + H2O = CTP + L-glutamate + ADP + phosphate + 2 H(+). The catalysed reaction is L-glutamine + H2O = L-glutamate + NH4(+). The enzyme catalyses UTP + NH4(+) + ATP = CTP + ADP + phosphate + 2 H(+). It functions in the pathway pyrimidine metabolism; CTP biosynthesis via de novo pathway; CTP from UDP: step 2/2. Allosterically activated by GTP, when glutamine is the substrate; GTP has no effect on the reaction when ammonia is the substrate. The allosteric effector GTP functions by stabilizing the protein conformation that binds the tetrahedral intermediate(s) formed during glutamine hydrolysis. Inhibited by the product CTP, via allosteric rather than competitive inhibition. In terms of biological role, catalyzes the ATP-dependent amination of UTP to CTP with either L-glutamine or ammonia as the source of nitrogen. Regulates intracellular CTP levels through interactions with the four ribonucleotide triphosphates. In Pyrococcus horikoshii (strain ATCC 700860 / DSM 12428 / JCM 9974 / NBRC 100139 / OT-3), this protein is CTP synthase.